The following is a 448-amino-acid chain: Putative diacyglycerol O-acyltransferase MT3848 (448 aa).

Histidine 136 (proton acceptor) is an active-site residue.

This sequence belongs to the long-chain O-acyltransferase family.

The enzyme catalyses an acyl-CoA + a 1,2-diacyl-sn-glycerol = a triacyl-sn-glycerol + CoA. Its pathway is glycerolipid metabolism; triacylglycerol biosynthesis. In Mycobacterium tuberculosis (strain CDC 1551 / Oshkosh), this protein is Putative diacyglycerol O-acyltransferase MT3848.